The chain runs to 194 residues: MRSPHAFRNGESPTLRDHTHFHSTVTAQKLRRFNSLILLLRLASFSFSLASAVFMLTNSRGSASPHWYDFDAFRFVFVANAIVALYSVFEMGTCVWEFSRETTLWPEAFQVWFDFGHDQVFSYLLLSAGSAAAALARTMRGGDTCTANKAFCLQSDVAIGLGFAAFLFLAFSSCFSGFRVACFLITGSRFHLYS.

Over 1 to 35 (MRSPHAFRNGESPTLRDHTHFHSTVTAQKLRRFNS) the chain is Cytoplasmic. A helical membrane pass occupies residues 36–56 (LILLLRLASFSFSLASAVFML). At 57–74 (TNSRGSASPHWYDFDAFR) the chain is on the extracellular side. A helical transmembrane segment spans residues 75-95 (FVFVANAIVALYSVFEMGTCV). Topologically, residues 96 to 114 (WEFSRETTLWPEAFQVWFD) are cytoplasmic. A helical membrane pass occupies residues 115 to 135 (FGHDQVFSYLLLSAGSAAAAL). At 136-157 (ARTMRGGDTCTANKAFCLQSDV) the chain is on the extracellular side. A helical membrane pass occupies residues 158–178 (AIGLGFAAFLFLAFSSCFSGF). Topologically, residues 179-194 (RVACFLITGSRFHLYS) are cytoplasmic.

Belongs to the Casparian strip membrane proteins (CASP) family. As to quaternary structure, homodimer and heterodimers.

Its subcellular location is the cell membrane. The sequence is that of CASP-like protein 4C1 from Arabidopsis thaliana (Mouse-ear cress).